The chain runs to 383 residues: Xylose/arabinose import ATP-binding protein XacK (383 aa).

An ABC transporter domain is found at 4-240 (LTLDDVTKVY…PNNLFVAGFI (237 aa)). ATP is bound at residue 41 to 48 (GPSGCGKS).

The protein belongs to the ABC transporter superfamily. Carbohydrate uptake transporter-1 (CUT1) (TC 3.A.1.1) family. The complex is composed of two ATP-binding proteins (XacJ and XacK), two transmembrane proteins (XacH and XacI) and a solute-binding protein (XacG).

The protein localises to the cell membrane. The enzyme catalyses D-xylose(out) + ATP + H2O = D-xylose(in) + ADP + phosphate + H(+). It carries out the reaction L-arabinose(out) + ATP + H2O = L-arabinose(in) + ADP + phosphate + H(+). Its function is as follows. Part of the ABC transporter complex XacGHIJK involved in the uptake of xylose and arabinose. Responsible for energy coupling to the transport system. The chain is Xylose/arabinose import ATP-binding protein XacK from Haloferax volcanii (strain ATCC 29605 / DSM 3757 / JCM 8879 / NBRC 14742 / NCIMB 2012 / VKM B-1768 / DS2) (Halobacterium volcanii).